A 469-amino-acid polypeptide reads, in one-letter code: Phenylalanine--tRNA ligase, mitochondrial (469 aa).

Residues 1–17 (MFLNRMMKTRTGLYRLY) constitute a mitochondrion transit peptide. Residues 126 to 129 (SAHE), arginine 155, 162 to 164 (THY), 169 to 171 (QME), glutamate 302, and phenylalanine 329 each bind substrate. Residues 372-469 (SKHPGSFRDV…LVKEYSVELR (98 aa)) enclose the FDX-ACB domain.

This sequence belongs to the class-II aminoacyl-tRNA synthetase family. As to quaternary structure, monomer.

Its subcellular location is the mitochondrion matrix. It carries out the reaction tRNA(Phe) + L-phenylalanine + ATP = L-phenylalanyl-tRNA(Phe) + AMP + diphosphate + H(+). Functionally, is responsible for the charging of tRNA(Phe) with phenylalanine in mitochondrial translation. This chain is Phenylalanine--tRNA ligase, mitochondrial (MSF1), found in Saccharomyces cerevisiae (strain ATCC 204508 / S288c) (Baker's yeast).